Reading from the N-terminus, the 245-residue chain is Complement C1q subcomponent subunit A (245 aa).

The signal sequence occupies residues 1–22; that stretch reads METSQGWLVACVLAVTLVWTVA. The region spanning 31 to 109 is the Collagen-like domain; the sequence is GKDGVAGIPG…KGVKGNPGNI (79 aa). A disordered region spans residues 35-111; that stretch reads VAGIPGRPGR…VKGNPGNIRD (77 aa). 2 positions are modified to 4-hydroxyproline: Pro39 and Pro45. Residue Lys48 is modified to 5-hydroxylysine. Lys48 carries O-linked (Gal...) hydroxylysine glycosylation. Pro54 bears the 4-hydroxyproline mark. Lys67 is modified (5-hydroxylysine). A glycan (O-linked (Gal...) hydroxylysine) is linked at Lys67. 4-hydroxyproline is present on residues Pro79 and Pro85. Position 100 is a 5-hydroxylysine (Lys100). A glycan (O-linked (Gal...) hydroxylysine) is linked at Lys100. Residues 110–245 form the C1q domain; the sequence is RDQPRPAFSA…FSGFLIFPSA (136 aa). N-linked (GlcNAc...) asparagine glycosylation occurs at Asn146. A disulfide bond links Cys172 and Cys190. Position 199 (Gln199) interacts with Ca(2+).

As to quaternary structure, core component of the complement C1 complex, a calcium-dependent complex composed of 1 molecule of the C1Q subcomplex, 2 molecules of C1R and 2 molecules of C1S. The C1Q subcomplex is composed 18 subunits: 3 chains of C1QA, C1QB, and C1QC trimerize to form 6 collagen-like triple helices connected to six globular ligand-recognition modules (C1q domain). Interacts with CR1 (via Sushi 24 and Sushi 25 domains). Interacts (via C-terminus) with CD33; this interaction activates CD33 inhibitory motifs. O-linked glycans are assumed to be the Glc-Gal disaccharides typically found as secondary modifications of hydroxylated lysines in collagen-like domains.

The protein resides in the secreted. It is found in the cell surface. The C1Q subcomplex is inhibited by sulfated molecules, such as triterpenoid sulfates, heparan sulfate, or chondroitin sulfates. Its function is as follows. Core component of the complement C1 complex, a multiprotein complex that initiates the classical pathway of the complement system, a cascade of proteins that leads to phagocytosis and breakdown of pathogens and signaling that strengthens the adaptive immune system. The classical complement pathway is initiated by the C1Q subcomplex of the C1 complex, which specifically binds IgG or IgM immunoglobulins complexed with antigens, forming antigen-antibody complexes on the surface of pathogens: C1QA, together with C1QB and C1QC, specifically recognizes and binds the Fc regions of IgG or IgM via its C1q domain. Immunoglobulin-binding activates the proenzyme C1R, which cleaves C1S, initiating the proteolytic cascade of the complement system. The C1Q subcomplex is activated by a hexamer of IgG complexed with antigens, while it is activated by a pentameric IgM. The C1Q subcomplex also recognizes and binds phosphatidylserine exposed on the surface of cells undergoing programmed cell death, possibly promoting activation of the complement system. The chain is Complement C1q subcomponent subunit A from Rattus norvegicus (Rat).